Here is a 460-residue protein sequence, read N- to C-terminus: Polygalacturonase (460 aa).

Residues 1 to 26 (MALKTQLLWSFVVVFVVSFSTTSCSG) form the signal peptide. The N-linked (GlcNAc...) asparagine glycan is linked to Asn280. Residue Asp292 is the Proton donor of the active site. Residue His315 is part of the active site. Asn421 carries an N-linked (GlcNAc...) asparagine glycan.

It belongs to the glycosyl hydrolase 28 family.

The protein resides in the secreted. It localises to the cell wall. The catalysed reaction is (1,4-alpha-D-galacturonosyl)n+m + H2O = (1,4-alpha-D-galacturonosyl)n + (1,4-alpha-D-galacturonosyl)m.. Acts in concert with the pectinesterase, in the ripening process. Is involved in cell wall metabolism, specifically in polyuronide degradation. This Malus domestica (Apple) protein is Polygalacturonase.